A 416-amino-acid polypeptide reads, in one-letter code: MDQPATPNSFRTGPDEQGMFGIFGGRFVAETLMPLILDLERHWNEVKNDPDFRAELTDLSTHYAGRPSKLYFAEGLTKHLREVSSAKGLGGGAKVYFKREDLNHTGSHKINNCLGQILLAKRMGKKRIIAETGAGQHGVASATVAARFGYPCVVYMGATDVARQSPNVFRMKLLGAEVRPVTAGHGTLKDAMNEALRDWVTNVEDTYYLIGTAAGPHPYPELVRDFQSVIGTEARAQILEQEGRLPDTIIAAVGGGSNAIGLFHPFLDDKDVRIIGIEAGGRGLDGIEHCASMNAGSPGVLHGNRTYLLQNADGQIMDGHSISAGLDYPGVGPEHSWLRDSGRVEYVPILDDEALEAFKLTTRVEGIIPALESAHAIAHAVKIVPAMDKDQIVIVNLSGRGDKDVHTVASMLGMEI.

Position 109 is an N6-(pyridoxal phosphate)lysine (K109).

Belongs to the TrpB family. As to quaternary structure, tetramer of two alpha and two beta chains. Requires pyridoxal 5'-phosphate as cofactor.

The catalysed reaction is (1S,2R)-1-C-(indol-3-yl)glycerol 3-phosphate + L-serine = D-glyceraldehyde 3-phosphate + L-tryptophan + H2O. It functions in the pathway amino-acid biosynthesis; L-tryptophan biosynthesis; L-tryptophan from chorismate: step 5/5. In terms of biological role, the beta subunit is responsible for the synthesis of L-tryptophan from indole and L-serine. In Mesorhizobium japonicum (strain LMG 29417 / CECT 9101 / MAFF 303099) (Mesorhizobium loti (strain MAFF 303099)), this protein is Tryptophan synthase beta chain.